We begin with the raw amino-acid sequence, 393 residues long: ATP phosphoribosyltransferase regulatory subunit (393 aa).

This sequence belongs to the class-II aminoacyl-tRNA synthetase family. HisZ subfamily. In terms of assembly, heteromultimer composed of HisG and HisZ subunits.

It is found in the cytoplasm. Its pathway is amino-acid biosynthesis; L-histidine biosynthesis; L-histidine from 5-phospho-alpha-D-ribose 1-diphosphate: step 1/9. In terms of biological role, required for the first step of histidine biosynthesis. May allow the feedback regulation of ATP phosphoribosyltransferase activity by histidine. The chain is ATP phosphoribosyltransferase regulatory subunit from Chromohalobacter salexigens (strain ATCC BAA-138 / DSM 3043 / CIP 106854 / NCIMB 13768 / 1H11).